A 229-amino-acid chain; its full sequence is Large ribosomal subunit protein uL1 (229 aa).

It belongs to the universal ribosomal protein uL1 family. In terms of assembly, part of the 50S ribosomal subunit.

Its function is as follows. Binds directly to 23S rRNA. The L1 stalk is quite mobile in the ribosome, and is involved in E site tRNA release. Functionally, protein L1 is also a translational repressor protein, it controls the translation of the L11 operon by binding to its mRNA. This Flavobacterium johnsoniae (strain ATCC 17061 / DSM 2064 / JCM 8514 / BCRC 14874 / CCUG 350202 / NBRC 14942 / NCIMB 11054 / UW101) (Cytophaga johnsonae) protein is Large ribosomal subunit protein uL1.